A 279-amino-acid polypeptide reads, in one-letter code: NADPH-dependent 7-cyano-7-deazaguanine reductase (279 aa).

86–88 is a binding site for substrate; sequence IES. Residue 88 to 89 participates in NADPH binding; sequence SK. Residue Cys-187 is the Thioimide intermediate of the active site. Asp-194 serves as the catalytic Proton donor. Residue 226–227 participates in substrate binding; the sequence is HE. An NADPH-binding site is contributed by 255–256; the sequence is RG.

This sequence belongs to the GTP cyclohydrolase I family. QueF type 2 subfamily. As to quaternary structure, homodimer.

Its subcellular location is the cytoplasm. The enzyme catalyses 7-aminomethyl-7-carbaguanine + 2 NADP(+) = 7-cyano-7-deazaguanine + 2 NADPH + 3 H(+). Its pathway is tRNA modification; tRNA-queuosine biosynthesis. Catalyzes the NADPH-dependent reduction of 7-cyano-7-deazaguanine (preQ0) to 7-aminomethyl-7-deazaguanine (preQ1). The protein is NADPH-dependent 7-cyano-7-deazaguanine reductase of Actinobacillus pleuropneumoniae serotype 7 (strain AP76).